We begin with the raw amino-acid sequence, 237 residues long: Riboflavin kinase (237 aa).

The interval 1-23 is disordered; it reads MSLPNPDNRPLLIGPPTGPEAPF. Mg(2+) contacts are provided by T46 and N48. Residues 82 to 126 are disordered; the sequence is VLYQKPPTSEPVMMDPVQQQQQQQQQQRNQQQQQEGGVGSAQQEK. Residues 99 to 115 show a composition bias toward low complexity; the sequence is QQQQQQQQQQRNQQQQQ. The Nucleophile role is filled by E158.

This sequence belongs to the flavokinase family. It depends on Zn(2+) as a cofactor. The cofactor is Mg(2+).

The catalysed reaction is riboflavin + ATP = FMN + ADP + H(+). The protein operates within cofactor biosynthesis; FMN biosynthesis; FMN from riboflavin (ATP route): step 1/1. Functionally, catalyzes the phosphorylation of riboflavin (vitamin B2) to form flavin mononucleotide (FMN) coenzyme. This chain is Riboflavin kinase (fmn1), found in Neurospora crassa (strain ATCC 24698 / 74-OR23-1A / CBS 708.71 / DSM 1257 / FGSC 987).